Here is a 227-residue protein sequence, read N- to C-terminus: Probable cytokinin riboside 5'-monophosphate phosphoribohydrolase LOGL9 (227 aa).

Positions 1–15 (MYISSPHTSHFTSID) are enriched in polar residues. The tract at residues 1-26 (MYISSPHTSHFTSIDRSPAVVSESDR) is disordered. Substrate is bound by residues E117, 135-136 (RK), and 152-158 (GYGTLEE).

This sequence belongs to the LOG family. In terms of tissue distribution, expressed in roots, leaves and stems.

It carries out the reaction N(6)-(dimethylallyl)adenosine 5'-phosphate + H2O = N(6)-dimethylallyladenine + D-ribose 5-phosphate. The catalysed reaction is 9-ribosyl-trans-zeatin 5'-phosphate + H2O = trans-zeatin + D-ribose 5-phosphate. Its function is as follows. Cytokinin-activating enzyme working in the direct activation pathway. Phosphoribohydrolase that converts inactive cytokinin nucleotides to the biologically active free-base forms. The protein is Probable cytokinin riboside 5'-monophosphate phosphoribohydrolase LOGL9 (LOGL9) of Oryza sativa subsp. japonica (Rice).